Reading from the N-terminus, the 315-residue chain is Transaldolase (315 aa).

K131 (schiff-base intermediate with substrate) is an active-site residue.

The protein belongs to the transaldolase family. Type 1 subfamily. As to quaternary structure, homodimer.

Its subcellular location is the cytoplasm. It catalyses the reaction D-sedoheptulose 7-phosphate + D-glyceraldehyde 3-phosphate = D-erythrose 4-phosphate + beta-D-fructose 6-phosphate. It functions in the pathway carbohydrate degradation; pentose phosphate pathway; D-glyceraldehyde 3-phosphate and beta-D-fructose 6-phosphate from D-ribose 5-phosphate and D-xylulose 5-phosphate (non-oxidative stage): step 2/3. In terms of biological role, transaldolase is important for the balance of metabolites in the pentose-phosphate pathway. The protein is Transaldolase of Actinobacillus pleuropneumoniae serotype 3 (strain JL03).